A 431-amino-acid polypeptide reads, in one-letter code: Glutamyl-tRNA reductase (431 aa).

Substrate-binding positions include 49–52 (TCNR), Ser-109, 114–116 (EGQ), and Gln-120. The active-site Nucleophile is the Cys-50. Residue 189–194 (GAGKMA) coordinates NADP(+).

It belongs to the glutamyl-tRNA reductase family. As to quaternary structure, homodimer.

The catalysed reaction is (S)-4-amino-5-oxopentanoate + tRNA(Glu) + NADP(+) = L-glutamyl-tRNA(Glu) + NADPH + H(+). Its pathway is porphyrin-containing compound metabolism; protoporphyrin-IX biosynthesis; 5-aminolevulinate from L-glutamyl-tRNA(Glu): step 1/2. The protein operates within porphyrin-containing compound metabolism; chlorophyll biosynthesis. Its function is as follows. Catalyzes the NADPH-dependent reduction of glutamyl-tRNA(Glu) to glutamate 1-semialdehyde (GSA). This chain is Glutamyl-tRNA reductase, found in Synechococcus sp. (strain JA-3-3Ab) (Cyanobacteria bacterium Yellowstone A-Prime).